The chain runs to 249 residues: 1-(5-phosphoribosyl)-5-[(5-phosphoribosylamino)methylideneamino] imidazole-4-carboxamide isomerase (249 aa).

Catalysis depends on Asp8, which acts as the Proton acceptor. Asp129 functions as the Proton donor in the catalytic mechanism.

It belongs to the HisA/HisF family.

The protein resides in the cytoplasm. The catalysed reaction is 1-(5-phospho-beta-D-ribosyl)-5-[(5-phospho-beta-D-ribosylamino)methylideneamino]imidazole-4-carboxamide = 5-[(5-phospho-1-deoxy-D-ribulos-1-ylimino)methylamino]-1-(5-phospho-beta-D-ribosyl)imidazole-4-carboxamide. It participates in amino-acid biosynthesis; L-histidine biosynthesis; L-histidine from 5-phospho-alpha-D-ribose 1-diphosphate: step 4/9. The sequence is that of 1-(5-phosphoribosyl)-5-[(5-phosphoribosylamino)methylideneamino] imidazole-4-carboxamide isomerase from Magnetococcus marinus (strain ATCC BAA-1437 / JCM 17883 / MC-1).